Consider the following 417-residue polypeptide: Gamma-glutamyl phosphate reductase (417 aa).

Belongs to the gamma-glutamyl phosphate reductase family.

It localises to the cytoplasm. It catalyses the reaction L-glutamate 5-semialdehyde + phosphate + NADP(+) = L-glutamyl 5-phosphate + NADPH + H(+). Its pathway is amino-acid biosynthesis; L-proline biosynthesis; L-glutamate 5-semialdehyde from L-glutamate: step 2/2. Catalyzes the NADPH-dependent reduction of L-glutamate 5-phosphate into L-glutamate 5-semialdehyde and phosphate. The product spontaneously undergoes cyclization to form 1-pyrroline-5-carboxylate. This Escherichia coli O81 (strain ED1a) protein is Gamma-glutamyl phosphate reductase.